Consider the following 175-residue polypeptide: Bifunctional protein PyrR (175 aa).

A PRPP-binding motif is present at residues 97–109 (IVLIDDVLFTGRT).

Belongs to the purine/pyrimidine phosphoribosyltransferase family. PyrR subfamily. Homodimer and homohexamer; in equilibrium.

The enzyme catalyses UMP + diphosphate = 5-phospho-alpha-D-ribose 1-diphosphate + uracil. Functionally, regulates transcriptional attenuation of the pyrimidine nucleotide (pyr) operon by binding in a uridine-dependent manner to specific sites on pyr mRNA. This disrupts an antiterminator hairpin in the RNA and favors formation of a downstream transcription terminator, leading to a reduced expression of downstream genes. In terms of biological role, also displays a weak uracil phosphoribosyltransferase activity which is not physiologically significant. This chain is Bifunctional protein PyrR, found in Leuconostoc mesenteroides subsp. mesenteroides (strain ATCC 8293 / DSM 20343 / BCRC 11652 / CCM 1803 / JCM 6124 / NCDO 523 / NBRC 100496 / NCIMB 8023 / NCTC 12954 / NRRL B-1118 / 37Y).